The primary structure comprises 84 residues: Small ribosomal subunit protein bS20 (84 aa).

The protein belongs to the bacterial ribosomal protein bS20 family.

Binds directly to 16S ribosomal RNA. This Lacticaseibacillus casei (strain BL23) (Lactobacillus casei) protein is Small ribosomal subunit protein bS20.